The primary structure comprises 312 residues: MRILFFGTAFISETYLKELHKKCHEIFVVTTPDKPALRGQKLIYPAVKVYAVKNNISFIQPEKFTLDVIETIKNFAADTGVAVAYGKLIPKVVFDIPKYKTFNIHFSLLPKYKGAAPVQHALCRGETETGISSFYIEEGLDTGGIIIQEKLNISIKDNAETLLNKLILLGIDVMNKTLELFRCGKCDAASQTGDPSFAPSLKKIDGLVNWNKRAGEIYNQFRGLYLWPGIYSTISQGKLVGKRIKFREIEVFDSDSINKDSGIVYSAEKNRGFTVSCAVGRILVVKMQSENKPVVSAWDFIQGRQISAGDRF.

107–110 (SLLP) provides a ligand contact to (6S)-5,6,7,8-tetrahydrofolate.

The protein belongs to the Fmt family.

It catalyses the reaction L-methionyl-tRNA(fMet) + (6R)-10-formyltetrahydrofolate = N-formyl-L-methionyl-tRNA(fMet) + (6S)-5,6,7,8-tetrahydrofolate + H(+). Functionally, attaches a formyl group to the free amino group of methionyl-tRNA(fMet). The formyl group appears to play a dual role in the initiator identity of N-formylmethionyl-tRNA by promoting its recognition by IF2 and preventing the misappropriation of this tRNA by the elongation apparatus. The sequence is that of Methionyl-tRNA formyltransferase from Endomicrobium trichonymphae.